A 121-amino-acid chain; its full sequence is Large ribosomal subunit protein bL20 (121 aa).

The protein belongs to the bacterial ribosomal protein bL20 family.

Binds directly to 23S ribosomal RNA and is necessary for the in vitro assembly process of the 50S ribosomal subunit. It is not involved in the protein synthesizing functions of that subunit. The polypeptide is Large ribosomal subunit protein bL20 (Chlamydia felis (strain Fe/C-56) (Chlamydophila felis)).